We begin with the raw amino-acid sequence, 576 residues long: Probable metalloreductase AIM14 (576 aa).

7 consecutive transmembrane segments (helical) span residues I21–L41, A70–L90, L101–R118, I142–D162, F177–M197, L204–S224, and F230–F250. The 119-residue stretch at L101–L219 folds into the Ferric oxidoreductase domain. The region spanning F250 to P388 is the FAD-binding FR-type domain. A compositionally biased stretch (polar residues) spans I480 to N505. Residues I480–S507 are disordered.

Belongs to the ferric reductase (FRE) family. AIM14 subfamily. In terms of assembly, interacts with ribosomes.

The protein resides in the membrane. Probable cell surface metalloreductase. May be involved in iron or copper homeostasis. This is Probable metalloreductase AIM14 (AIM14) from Saccharomyces cerevisiae (strain Lalvin EC1118 / Prise de mousse) (Baker's yeast).